Consider the following 369-residue polypeptide: Flagellar P-ring protein 1 (369 aa).

Residues 1–23 (MRKQSLVTLLMVLLSLVWLPASA) form the signal peptide.

It belongs to the FlgI family. The basal body constitutes a major portion of the flagellar organelle and consists of four rings (L,P,S, and M) mounted on a central rod.

It localises to the periplasm. The protein resides in the bacterial flagellum basal body. Its function is as follows. Assembles around the rod to form the L-ring and probably protects the motor/basal body from shearing forces during rotation. The sequence is that of Flagellar P-ring protein 1 from Yersinia pseudotuberculosis serotype I (strain IP32953).